We begin with the raw amino-acid sequence, 378 residues long: Erythronate-4-phosphate dehydrogenase (378 aa).

Substrate-binding residues include S45 and T66. The NAD(+) site is built by D146 and T175. R208 is an active-site residue. D232 provides a ligand contact to NAD(+). E237 is a catalytic residue. Residue H254 is the Proton donor of the active site. G257 serves as a coordination point for NAD(+). Residue Y258 participates in substrate binding.

Belongs to the D-isomer specific 2-hydroxyacid dehydrogenase family. PdxB subfamily. Homodimer.

The protein resides in the cytoplasm. The enzyme catalyses 4-phospho-D-erythronate + NAD(+) = (R)-3-hydroxy-2-oxo-4-phosphooxybutanoate + NADH + H(+). Its pathway is cofactor biosynthesis; pyridoxine 5'-phosphate biosynthesis; pyridoxine 5'-phosphate from D-erythrose 4-phosphate: step 2/5. Functionally, catalyzes the oxidation of erythronate-4-phosphate to 3-hydroxy-2-oxo-4-phosphonooxybutanoate. The protein is Erythronate-4-phosphate dehydrogenase of Shigella flexneri serotype 5b (strain 8401).